We begin with the raw amino-acid sequence, 381 residues long: Homoserine O-succinyltransferase (381 aa).

The AB hydrolase-1 domain occupies 45–360; the sequence is NAVLVCHALN…PHGHDAFLLD (316 aa). Catalysis depends on serine 151, which acts as the Nucleophile. Residue arginine 221 coordinates substrate. Catalysis depends on residues aspartate 321 and histidine 354. Aspartate 355 is a binding site for substrate.

This sequence belongs to the AB hydrolase superfamily. MetX family. Homodimer.

It localises to the cytoplasm. It carries out the reaction L-homoserine + succinyl-CoA = O-succinyl-L-homoserine + CoA. It functions in the pathway amino-acid biosynthesis; L-methionine biosynthesis via de novo pathway; O-succinyl-L-homoserine from L-homoserine: step 1/1. Functionally, transfers a succinyl group from succinyl-CoA to L-homoserine, forming succinyl-L-homoserine. In Burkholderia ambifaria (strain MC40-6), this protein is Homoserine O-succinyltransferase.